We begin with the raw amino-acid sequence, 438 residues long: Aspartate--tRNA(Asp/Asn) ligase (438 aa).

Glu176 is an L-aspartate binding site. The segment at 198 to 201 (QLYK) is aspartate. Arg220 provides a ligand contact to L-aspartate. ATP contacts are provided by residues 220 to 222 (RAE), 228 to 230 (RHL), and Glu361. Residues Glu361 and Ser364 each coordinate Mg(2+). L-aspartate is bound by residues Ser364 and Arg368. Residue 409–412 (GADR) coordinates ATP.

This sequence belongs to the class-II aminoacyl-tRNA synthetase family. Type 2 subfamily. As to quaternary structure, homodimer. Mg(2+) is required as a cofactor.

Its subcellular location is the cytoplasm. The catalysed reaction is tRNA(Asx) + L-aspartate + ATP = L-aspartyl-tRNA(Asx) + AMP + diphosphate. Functionally, aspartyl-tRNA synthetase with relaxed tRNA specificity since it is able to aspartylate not only its cognate tRNA(Asp) but also tRNA(Asn). Reaction proceeds in two steps: L-aspartate is first activated by ATP to form Asp-AMP and then transferred to the acceptor end of tRNA(Asp/Asn). The polypeptide is Aspartate--tRNA(Asp/Asn) ligase (Methanococcus maripaludis (strain C6 / ATCC BAA-1332)).